The chain runs to 496 residues: Fusarielin biosynthesis cluster transcription factor FSL7 (496 aa).

The segment at residues 16 to 46 (CDRCHELKIRCTRTGGTESRCDRCEKNDIDC) is a DNA-binding region (zn(2)-C6 fungal-type). 5 disordered regions span residues 57 to 102 (PKSQ…SINS), 189 to 224 (RSIN…EDQM), 281 to 307 (ANHT…QSRS), 348 to 379 (GSTS…KPRT), and 444 to 470 (MTRE…AQAA). Composition is skewed to polar residues over residues 65-89 (GPNT…QEQM) and 207-218 (ELQSTQSASGSP). Over residues 281-294 (ANHTSSSSSSNSTT) the composition is skewed to low complexity. The span at 355–379 (YNDTTAHPSSASLPSQTGGPTKPRT) shows a compositional bias: polar residues. A compositionally biased stretch (basic and acidic residues) spans 444 to 460 (MTREQHVSTGHGPDRHT).

Its subcellular location is the nucleus. In terms of biological role, transcription regulator that specifically up-regulates the gene cluster that mediates the biosynthesis of fusarielins F, G and H, decaketide compounds with 5 methylations and a decaline core that act as mycoestrogens as they stimulate growth of MCF-7 breast cancer cells. Probably binds the 5'-CGGNNNCCG-3' motif present in the promoter of all the cluster genes. This Gibberella zeae (strain ATCC MYA-4620 / CBS 123657 / FGSC 9075 / NRRL 31084 / PH-1) (Wheat head blight fungus) protein is Fusarielin biosynthesis cluster transcription factor FSL7.